Reading from the N-terminus, the 266-residue chain is Signal peptidase I (266 aa).

The Cytoplasmic portion of the chain corresponds to 1–20 (MQTDNTKSNTNKTAKQEWGS). Residues 21–41 (FAFVICIALLIRILIMEPFTV) form a helical membrane-spanning segment. The Periplasmic segment spans residues 42-266 (PTGSMKATIL…IFRNLYSTDE (225 aa)). Active-site residues include Ser45 and Lys108.

This sequence belongs to the peptidase S26 family.

The protein localises to the cell inner membrane. The enzyme catalyses Cleavage of hydrophobic, N-terminal signal or leader sequences from secreted and periplasmic proteins.. The polypeptide is Signal peptidase I (lepB) (Rickettsia felis (strain ATCC VR-1525 / URRWXCal2) (Rickettsia azadi)).